The primary structure comprises 340 residues: Tetraacyldisaccharide 4'-kinase (340 aa).

51–58 serves as a coordination point for ATP; it reads HMGGAGKT.

This sequence belongs to the LpxK family.

It catalyses the reaction a lipid A disaccharide + ATP = a lipid IVA + ADP + H(+). It participates in glycolipid biosynthesis; lipid IV(A) biosynthesis; lipid IV(A) from (3R)-3-hydroxytetradecanoyl-[acyl-carrier-protein] and UDP-N-acetyl-alpha-D-glucosamine: step 6/6. Functionally, transfers the gamma-phosphate of ATP to the 4'-position of a tetraacyldisaccharide 1-phosphate intermediate (termed DS-1-P) to form tetraacyldisaccharide 1,4'-bis-phosphate (lipid IVA). The protein is Tetraacyldisaccharide 4'-kinase of Rhodopseudomonas palustris (strain ATCC BAA-98 / CGA009).